Here is a 918-residue protein sequence, read N- to C-terminus: Whirlin (918 aa).

In terms of domain architecture, PDZ 1 spans 141 to 224; it reads LVSLRRAKAH…LVLSVYSAGR (84 aa). The segment at 240–266 is disordered; the sequence is PQGRSTSPPSSLPQPHGSTLRQREDDR. Residues 280-362 enclose the PDZ 2 domain; it reads KVNLVLGDGR…LILTVKDVGR (83 aa). 3 disordered regions span residues 387-407, 503-538, and 560-824; these read NSAG…GFYK, SMKA…TSTT, and EGTG…LEPT. Residues 522-538 are compositionally biased toward low complexity; sequence SYSDTGSSTGSHGTSTT. The segment covering 563–572 has biased composition (polar residues); that stretch reads GETTQGSTNA. 2 stretches are compositionally biased toward pro residues: residues 591–600 and 638–649; these read IKPPPPPPPL and RSPPPGTAPTPG. Residues 654–672 show a composition bias toward polar residues; that stretch reads QDSPSSPIYASISHANPSS. Position 696 is a phosphoserine (Ser696). Polar residues-rich tracts occupy residues 754 to 773 and 783 to 798; these read QTRT…TLSE and EAST…SAKN. Over residues 800 to 811 the composition is skewed to basic and acidic residues; that stretch reads NGKEQPRTERTA. The region spanning 827 to 910 is the PDZ 3 domain; sequence LVRVRKSAAT…TKERDYIDFL (84 aa).

Forms homooligomers. Interacts (via C-terminal PDZ domain) with MYO15A; this interaction is necessary for localization of WHRN to stereocilia tips. Interacts (via C-terminal PDZ domain) with MPP1/p55. Interacts with LRRC4C/NGL1. Interacts with MYO7A. Interacts with RPGR. Interacts with EPS8. Interacts with CASK. Interacts with CIB2. Component of USH2 complex, composed of ADGRV1, PDZD7, USH2A and WHRN. Interacts (via PDZ domains) with PDZD7; the interaction is direct. Interacts (via N-terminal PDZ domain) with USH2A (via cytoplasmic region). Interacts with ADGRV1/MASS1 (via cytoplasmic region). In terms of tissue distribution, expressed in the retina. Colocalizes with RPGR in the photoreceptor connecting cilium, a thin bridge linking the cell body and the light-sensing outer segment (at protein level). Detected in the inner ear throughout development from embryonic day 12 to 20 days after birth. Displays a dynamic pattern of expression after birth, demonstrating an ordered appearance and fade-out across stereocilia rows. Isoforms 5, 6, 7 and 8 are not detected in the retina.

It localises to the cytoplasm. The protein resides in the cell projection. The protein localises to the stereocilium. Its subcellular location is the growth cone. It is found in the photoreceptor inner segment. It localises to the synapse. Its function is as follows. Involved in hearing and vision as member of the USH2 complex. Necessary for elongation and maintenance of inner and outer hair cell stereocilia in the organ of Corti in the inner ear. Involved in the maintenance of the hair bundle ankle region, which connects stereocilia in cochlear hair cells of the inner ear. In retina photoreceptors, required for the maintenance of periciliary membrane complex that seems to play a role in regulating intracellular protein transport. The chain is Whirlin from Mus musculus (Mouse).